The following is a 393-amino-acid chain: Ceramide synthase 4 (393 aa).

The Lumenal portion of the chain corresponds to 1 to 31; that stretch reads MSFSLSEWLWQETYWLPPNVTWAELEDRDGL. A glycan (N-linked (GlcNAc...) asparagine) is linked at N19. A helical transmembrane segment spans residues 32–52; the sequence is VFAHPHHVLAAFPVALVLVAV. Residues 67–128 are homeobox-like; the sequence is WMGVQDPIRR…RRRRNQDRPS (62 aa). Residues 131 to 332 form the TLC domain; it reads KKFCEACWRF…ILRMLYSFLH (202 aa). 4 consecutive transmembrane segments (helical) span residues 140 to 160, 179 to 199, 217 to 237, and 265 to 285; these read FVFYLCSFVGGTSILYHESWL, LYWWYLLELGFYLSLLITLPF, VGLIGFSYSVNLLRIGAVVLL, and FIMFALVFFYTRLIFFPTQVI. Positions 291–301 match the Last loop motif motif; sequence DSIKNSGPFFG. The chain crosses the membrane as a helical span at residues 304-324; the sequence is FFIVLLVMLQILHVYWFCLIL. At 325–393 the chain is on the cytoplasmic side; it reads RMLYSFLHKG…CLTNGHTRAT (69 aa). Residues 341–393 are disordered; it reads RSDVEEPDSSDDEPVSEGPQLKNGMARGSRVAVTNGPRSRAAACLTNGHTRAT. Phosphoserine occurs at positions 342, 349, and 350. The span at 345-355 shows a compositional bias: acidic residues; the sequence is EEPDSSDDEPV.

In terms of processing, phosphorylated at the C-terminus by CK2. Ubiquitously expressed, with highest levels in skin.

The protein localises to the endoplasmic reticulum membrane. It carries out the reaction sphinganine + octadecanoyl-CoA = N-(octadecanoyl)-sphinganine + CoA + H(+). The enzyme catalyses eicosanoyl-CoA + sphinganine = N-eicosanoylsphinganine + CoA + H(+). The catalysed reaction is docosanoyl-CoA + sphinganine = N-docosanoylsphinganine + CoA + H(+). It catalyses the reaction tetracosanoyl-CoA + sphinganine = N-tetracosanoylsphinganine + CoA + H(+). It carries out the reaction hexacosanoyl-CoA + sphinganine = N-hexacosanoylsphinganine + CoA + H(+). The enzyme catalyses a fatty acyl-CoA + sphing-4-enine = an N-acylsphing-4-enine + CoA + H(+). The catalysed reaction is sphing-4-enine + octadecanoyl-CoA = N-octadecanoylsphing-4-enine + CoA + H(+). It catalyses the reaction hexadecasphinganine + octadecanoyl-CoA = N-octadecanoylhexadecasphinganine + CoA + H(+). It functions in the pathway lipid metabolism; sphingolipid metabolism. In terms of biological role, ceramide synthase that catalyzes formation of ceramide from sphinganine and acyl-CoA substrates, with high selectivity toward long and very-long chains (C18:0-C22:0) as acyl donor. The protein is Ceramide synthase 4 of Mus musculus (Mouse).